Here is a 373-residue protein sequence, read N- to C-terminus: Muscleblind-like protein 2 (373 aa).

C3H1-type zinc fingers lie at residues Trp13–Lys41, Asn47–Thr73, Thr176–Asp204, and Asp212–Ala238.

The protein belongs to the muscleblind family. Interacts with ITGA3.

Its subcellular location is the nucleus. It localises to the cytoplasm. Mediates pre-mRNA alternative splicing regulation. Acts either as activator or repressor of splicing on specific pre-mRNA targets. Inhibits cardiac troponin-T (TNNT2) pre-mRNA exon inclusion but induces insulin receptor (IR) pre-mRNA exon inclusion in muscle. Antagonizes the alternative splicing activity pattern of CELF proteins. RNA-binding protein that binds to 5'ACACCC-3' core sequence, termed zipcode, within the 3'UTR of ITGA3. Binds to CUG triplet repeat expansion in myotonic dystrophy muscle cells by sequestering the target RNAs. Together with RNA binding proteins RBPMS and RBFOX2, activates vascular smooth muscle cells alternative splicing events. Regulates NCOR2 alternative splicing. Seems to regulate expression and localization of ITGA3 by transporting it from the nucleus to cytoplasm at adhesion plaques. May play a role in myotonic dystrophy pathophysiology (DM). The polypeptide is Muscleblind-like protein 2 (Mbnl2) (Mus musculus (Mouse)).